Here is a 1850-residue protein sequence, read N- to C-terminus: MRGIILALVLTLVGSQKFDIDPGFNSRRSYLYNYEGSMLNGLQDRSLGKAGVRLSSKLEISGLPENAYLLKVRSPQVEEYNGVWPRDPFTRSSKITQVISSCFTRLFKFEYSSGRIGNIYAPEDCPDLCVNIVRGILNMFQMTIKKSQNVYELQEAGIGGICHARYVIQEDRKNSRIYVTRTVDLNNCQEKVQKSIGMAYIYPCPVDVMKERLTKGTTAFSYKLKQSDSGTLITDVSSRQVYQISPFNEPTGVAVMEARQQLTLVEVRSERGSAPDVPMQNYGSLRYRFPAVLPQMPLQLIKTKNPEQRIVETLQHIVLNNQQDFHDDVSYRFLEVVQLCRIANADNLESIWRQVSDKPRYRRWLLSAVSASGTTETLKFLKNRIRNDDLNYIQTLLTVSLTLHLLQADEHTLPIAADLMTSSRIQKNPVLQQVACLGYSSVVNRYCSQTSACPKEALQPIHDLADEAISRGREDKMKLALKCIGNMGEPASLKRILKFLPISSSSAADIPVHIQIDAITALKKIAWKDPKTVQGYLIQILADQSLPPEVRMMACAVIFETRPALALITTIANVAMKESNMQVASFVYSHMKSLSKSRLPFMYNISSACNIALKLLSPKLDSMSYRYSKVIRADTYFDNYRVGATGEIFVVNSPRTMFPSAIISKLMANSAGSVADLVEVGIRVEGLADVIMKRNIPFAEYPTYKQIKELGKALQGWKELPTETPLVSAYLKILGQEVAFININKELLQQVMKTVVEPADRNAAIKRIANQIRNSIAGQWTQPVWMGELRYVVPSCLGLPLEYGSYTTALARAAVSVEGKMTPPLTGDFRLSQLLESTMQIRSDLKPSLYVHTVATMGVNTEYFQHAVEIQGEVQTRMPMKFDAKIDVKLKNLKIETNPCREETEIVVGRHKAFAVSRNIGELGVEKRTSILPEDAPLDVTEEPFQTSERASREHFAMQGPDSMPRKQSHSSREDLRRSTGKRAHKRDICLKMHHIGCQLCFSRRSRDASFIQNTYLHKLIGEHEAKIVLMPVHTDADIDKIQLEIQAGSRAAARIITEVNPESEEEDESSPYEDIQAKLKRILGIDSMFKVANKTRHPKNRPSKKGNTVLAEFGTEPDAKTSSSSSSASSTATSSSSSSASSPNRKKPMDEEENDQVKQARNKDASSSSRSSKSSNSSKRSSSKSSNSSKRSSSSSSSSSSSSRSSSSSSSSSSNSKSSSSSSKSSSSSSRSRSSSKSSSSSSSSSSSSSSKSSSSRSSSSSSKSSSHHSHSHHSGHLNGSSSSSSSSRSVSHHSHEHHSGHLEDDSSSSSSSSVLSKIWGRHEIYQYRFRSAHRQEFPKRKLPGDRATSRYSSTRSSHDTSRAASWPKFLGDIKTPVLAAFLHGISNNKKTGGLQLVVYADTDSVRPRVQVFVTNLTDSSKWKLCADASVRNAHKAVAYVKWGWDCRDYKVSTELVTGRFAGHPAAQVKLEWPKVPSNVRSVVEWFYEFVPGAAFMLGFSERMDKNPSRQARMVVALTSPRTCDVVVKLPDIILYQKAVRLPLSLPVGPRIPASELQPPIWNVFAEAPSAVLENLKARCSVSYNKIKTFNEVKFNYSMPANCYHILVQDCSSELKFLVMMKSAGEATNLKAINIKIGSHEIDMHPVNGQVKLLVDGAESPTANISLISAGASLWIHNENQGFALAAPGHGIDKLYFDGKTITIQVPLWMAGKTCGICGKYDAECEQEYRMPNGYLAKNAVSFGHSWILEEAPCRGACKLHRSFVKLEKTVQLAGVDSKCYSTEPVLRCAKGCSATKTTPVTVGFHCLPADSANSLTDKQMKYDQKSEDMQDTVDAHTTCSCENEECST.

Residues 1–15 form the signal peptide; that stretch reads MRGIILALVLTLVGS. One can recognise a Vitellogenin domain in the interval 24 to 662; it reads FNSRRSYLYN…SPRTMFPSAI (639 aa). Asn-604 is a glycosylation site (N-linked (GlcNAc...) asparagine). The segment at 935–984 is disordered; that stretch reads DAPLDVTEEPFQTSERASREHFAMQGPDSMPRKQSHSSREDLRRSTGKRA. Residue Asn-1094 is glycosylated (N-linked (GlcNAc...) asparagine). 2 disordered regions span residues 1115-1313 and 1338-1362; these read GTEP…SSSS and EFPKRKLPGDRATSRYSSTRSSHDT. Residues 1122–1143 are compositionally biased toward low complexity; the sequence is TSSSSSSASSTATSSSSSSASS. Over residues 1156 to 1165 the composition is skewed to basic and acidic residues; it reads DQVKQARNKD. Low complexity predominate over residues 1167–1266; the sequence is SSSSRSSKSS…SRSSSSSSKS (100 aa). Asn-1177 and Asn-1188 each carry an N-linked (GlcNAc...) asparagine glycan. The span at 1267–1277 shows a compositional bias: basic residues; that stretch reads SSHHSHSHHSG. Residues 1278-1291 show a composition bias toward low complexity; sequence HLNGSSSSSSSSRS. The N-linked (GlcNAc...) asparagine glycan is linked to Asn-1280. A compositionally biased stretch (basic and acidic residues) spans 1338 to 1350; it reads EFPKRKLPGDRAT. N-linked (GlcNAc...) asparagine glycosylation is found at Asn-1417, Asn-1597, and Asn-1665. In terms of domain architecture, VWFD spans 1579 to 1756; that stretch reads ARCSVSYNKI…SWILEEAPCR (178 aa). 2 disulfide bridges follow: Cys-1581/Cys-1719 and Cys-1604/Cys-1755.

Phosvitin, an egg yolk storage protein, is one of the most highly phosphorylated (10%) proteins in nature. Post-translationally, cathepsin D is responsible for intraoocytic processing of vitellogenin. In terms of processing, may contain intrachain disulfide bonds. As to expression, after incorporation from serum via a specific receptor, it is cleaved into four fragments, heavy and light chain lipovitellins, phosphovitin and YGP40, and YGP40 is released into the yolk plasma before or during compartmentation of lipovitellin-phosvitin complex into the yolk granule.

Its function is as follows. Precursor of the major egg-yolk proteins that are sources of nutrients during early development of oviparous organisms. Functionally, phosvitin is believed to be of importance in sequestering calcium, iron and other cations for the developing embryo. This Gallus gallus (Chicken) protein is Vitellogenin-2 (VTG2).